The primary structure comprises 51 residues: Large ribosomal subunit protein eL39-like (51 aa).

It belongs to the eukaryotic ribosomal protein eL39 family. Component of a male germ cell-specific 60S large ribosomal subunit (LSU), which contains RPL10L and RPL39L, instead of RPL10 and RPL39 paralogs. The composition of the rest of the complex is similar to classical ribosomes. In terms of tissue distribution, highly expressed in spermatocytes and spermatids. Highly expressed in embryonic stem cells.

Its subcellular location is the cytoplasm. Male germ cell-specific component of the ribosome, which is required for the formation of sperm and male fertility. Replaces the RPL39 paralog in the ribosome of male germ cells. The ribosome is a large ribonucleoprotein complex responsible for the synthesis of proteins in the cell. The male germ cell-specific ribosome displays a ribosomal polypeptide exit tunnel of distinct size and charge states compared with the classical ribosome. It is responsible for regulating the biosynthesis and folding of a subset of male germ-cell-specific proteins that are essential for the formation of sperm. The chain is Large ribosomal subunit protein eL39-like from Mus musculus (Mouse).